A 123-amino-acid chain; its full sequence is Ribosome-binding factor A (123 aa).

The protein belongs to the RbfA family. As to quaternary structure, monomer. Binds 30S ribosomal subunits, but not 50S ribosomal subunits or 70S ribosomes.

The protein resides in the cytoplasm. In terms of biological role, one of several proteins that assist in the late maturation steps of the functional core of the 30S ribosomal subunit. Associates with free 30S ribosomal subunits (but not with 30S subunits that are part of 70S ribosomes or polysomes). Required for efficient processing of 16S rRNA. May interact with the 5'-terminal helix region of 16S rRNA. The protein is Ribosome-binding factor A of Syntrophus aciditrophicus (strain SB).